Reading from the N-terminus, the 271-residue chain is uncharacterized protein (271 aa).

Residues 77-205 form the DOD-type homing endonuclease domain; that stretch reads IIGVYFGDAN…SKELLKKLDV (129 aa).

This is an uncharacterized protein from Methanocaldococcus jannaschii (strain ATCC 43067 / DSM 2661 / JAL-1 / JCM 10045 / NBRC 100440) (Methanococcus jannaschii).